Reading from the N-terminus, the 185-residue chain is Elongation factor P (185 aa).

The protein belongs to the elongation factor P family.

The protein localises to the cytoplasm. Its pathway is protein biosynthesis; polypeptide chain elongation. Functionally, involved in peptide bond synthesis. Stimulates efficient translation and peptide-bond synthesis on native or reconstituted 70S ribosomes in vitro. Probably functions indirectly by altering the affinity of the ribosome for aminoacyl-tRNA, thus increasing their reactivity as acceptors for peptidyl transferase. In Dictyoglomus thermophilum (strain ATCC 35947 / DSM 3960 / H-6-12), this protein is Elongation factor P.